A 301-amino-acid chain; its full sequence is Homoserine O-acetyltransferase (301 aa).

Residue Cys142 is the Acyl-thioester intermediate of the active site. Substrate is bound by residues Lys163 and Ser192. The Proton acceptor role is filled by His235. Glu237 is an active-site residue. Substrate is bound at residue Arg249.

It belongs to the MetA family.

The protein resides in the cytoplasm. The enzyme catalyses L-homoserine + acetyl-CoA = O-acetyl-L-homoserine + CoA. Its pathway is amino-acid biosynthesis; L-methionine biosynthesis via de novo pathway; O-acetyl-L-homoserine from L-homoserine: step 1/1. Transfers an acetyl group from acetyl-CoA to L-homoserine, forming acetyl-L-homoserine. This chain is Homoserine O-acetyltransferase, found in Clostridium acetobutylicum (strain ATCC 824 / DSM 792 / JCM 1419 / IAM 19013 / LMG 5710 / NBRC 13948 / NRRL B-527 / VKM B-1787 / 2291 / W).